The chain runs to 468 residues: Methylenetetrahydrofolate--tRNA-(uracil-5-)-methyltransferase TrmFO (468 aa).

Position 10-15 (Gly-10–Gly-15) interacts with FAD.

The protein belongs to the MnmG family. TrmFO subfamily. The cofactor is FAD.

Its subcellular location is the cytoplasm. The enzyme catalyses uridine(54) in tRNA + (6R)-5,10-methylene-5,6,7,8-tetrahydrofolate + NADH + H(+) = 5-methyluridine(54) in tRNA + (6S)-5,6,7,8-tetrahydrofolate + NAD(+). The catalysed reaction is uridine(54) in tRNA + (6R)-5,10-methylene-5,6,7,8-tetrahydrofolate + NADPH + H(+) = 5-methyluridine(54) in tRNA + (6S)-5,6,7,8-tetrahydrofolate + NADP(+). Its function is as follows. Catalyzes the folate-dependent formation of 5-methyl-uridine at position 54 (M-5-U54) in all tRNAs. The sequence is that of Methylenetetrahydrofolate--tRNA-(uracil-5-)-methyltransferase TrmFO from Chelativorans sp. (strain BNC1).